The primary structure comprises 465 residues: L-seryl-tRNA(Sec) selenium transferase (465 aa).

K294 carries the post-translational modification N6-(pyridoxal phosphate)lysine.

This sequence belongs to the SelA family. It depends on pyridoxal 5'-phosphate as a cofactor.

Its subcellular location is the cytoplasm. The catalysed reaction is L-seryl-tRNA(Sec) + selenophosphate + H(+) = L-selenocysteinyl-tRNA(Sec) + phosphate. It participates in aminoacyl-tRNA biosynthesis; selenocysteinyl-tRNA(Sec) biosynthesis; selenocysteinyl-tRNA(Sec) from L-seryl-tRNA(Sec) (bacterial route): step 1/1. Converts seryl-tRNA(Sec) to selenocysteinyl-tRNA(Sec) required for selenoprotein biosynthesis. This is L-seryl-tRNA(Sec) selenium transferase from Maridesulfovibrio salexigens (strain ATCC 14822 / DSM 2638 / NCIMB 8403 / VKM B-1763) (Desulfovibrio salexigens).